The primary structure comprises 404 residues: Formate-dependent phosphoribosylglycinamide formyltransferase (404 aa).

Residues 25-26 (EL) and glutamate 85 each bind N(1)-(5-phospho-beta-D-ribosyl)glycinamide. ATP contacts are provided by residues arginine 118, lysine 159, 164–169 (SSGKGQ), 199–202 (EGFV), and glutamate 207. In terms of domain architecture, ATP-grasp spans 123–318 (RLAAEELGLP…EFELHARAIL (196 aa)). Residues glutamate 277 and glutamate 289 each coordinate Mg(2+). N(1)-(5-phospho-beta-D-ribosyl)glycinamide is bound by residues aspartate 296, lysine 365, and 372-373 (RR).

Belongs to the PurK/PurT family. In terms of assembly, homodimer.

It catalyses the reaction N(1)-(5-phospho-beta-D-ribosyl)glycinamide + formate + ATP = N(2)-formyl-N(1)-(5-phospho-beta-D-ribosyl)glycinamide + ADP + phosphate + H(+). The protein operates within purine metabolism; IMP biosynthesis via de novo pathway; N(2)-formyl-N(1)-(5-phospho-D-ribosyl)glycinamide from N(1)-(5-phospho-D-ribosyl)glycinamide (formate route): step 1/1. Involved in the de novo purine biosynthesis. Catalyzes the transfer of formate to 5-phospho-ribosyl-glycinamide (GAR), producing 5-phospho-ribosyl-N-formylglycinamide (FGAR). Formate is provided by PurU via hydrolysis of 10-formyl-tetrahydrofolate. The chain is Formate-dependent phosphoribosylglycinamide formyltransferase from Burkholderia thailandensis (strain ATCC 700388 / DSM 13276 / CCUG 48851 / CIP 106301 / E264).